The sequence spans 237 residues: Phosphatidylserine decarboxylase proenzyme (237 aa).

Ser206 (schiff-base intermediate with substrate; via pyruvic acid) is an active-site residue. At Ser206 the chain carries Pyruvic acid (Ser); by autocatalysis.

This sequence belongs to the phosphatidylserine decarboxylase family. PSD-A subfamily. As to quaternary structure, heterodimer of a large membrane-associated beta subunit and a small pyruvoyl-containing alpha subunit. Pyruvate is required as a cofactor. Is synthesized initially as an inactive proenzyme. Formation of the active enzyme involves a self-maturation process in which the active site pyruvoyl group is generated from an internal serine residue via an autocatalytic post-translational modification. Two non-identical subunits are generated from the proenzyme in this reaction, and the pyruvate is formed at the N-terminus of the alpha chain, which is derived from the carboxyl end of the proenzyme. The post-translation cleavage follows an unusual pathway, termed non-hydrolytic serinolysis, in which the side chain hydroxyl group of the serine supplies its oxygen atom to form the C-terminus of the beta chain, while the remainder of the serine residue undergoes an oxidative deamination to produce ammonia and the pyruvoyl prosthetic group on the alpha chain.

It localises to the cell membrane. The catalysed reaction is a 1,2-diacyl-sn-glycero-3-phospho-L-serine + H(+) = a 1,2-diacyl-sn-glycero-3-phosphoethanolamine + CO2. It participates in phospholipid metabolism; phosphatidylethanolamine biosynthesis; phosphatidylethanolamine from CDP-diacylglycerol: step 2/2. Its function is as follows. Catalyzes the formation of phosphatidylethanolamine (PtdEtn) from phosphatidylserine (PtdSer). In Rhodococcus jostii (strain RHA1), this protein is Phosphatidylserine decarboxylase proenzyme.